Here is a 913-residue protein sequence, read N- to C-terminus: MTDNNDDKTLNAPAKKTLTLKPGGMNQGTVRQDMGRGRTNAVVVETRKRRPHRPEDEKPVQPVVAAPKPAAPAPVAARPQAPQPRIHQPGGQQQRPGSSQSQQRSGSSAPQQRQADRPRGNVLHDLSAGEMEARRRALMEAQARDVVEAKQRAEDEARRKVEEEQRIAAEKMEAANRAAEEAAAAKVAASQPAAEVRAEPASERPAAAAAPAPRTDARPQSAAAAPRSAPATPDAAAPRGRRTGGDDEDDRGAVRRGSSLPARGKVVAPAPAKPAARLKTEEERRRGKLTVTSNLEEDGTPRGRSMASMRRRQEKFRRSQMQETREKVLREVILPETITIQELSQRMSERAVDVIKFLMKEGQMLKPGDVIDADLAELIAVEFGHTVKRVSESDVEEGIFNQTDDEGEMVSRPPVVTIMGHVDHGKTSLLDAIRQANVVSGEAGGITQHIGAYQVEKNGHKITFIDTPGHAAFTAMRARGAQATDIAVLVVAADDSVMPQTIESINHAKAAGVPIVVAINKIDKHEANPDKVRQQLLQHEVFVESMGGEVLDVEVSAKNKLNLDKLLEAILLQAEILDLKADPSRTAEGTVIEAELDRGRGAVATVLVQKGTLKPGQIIVAGDQWGRVRALVNDKGDHVKEAGPAMPVEILGLSGTPSAGDRFAVVENESRAREISEYRQRLARDKAVARQTGQRGSLEQMMSQLQTSGLKEFPLVIKADVQGSVEAIIASLDKLGTDEVRARVVHSGAGAITESDISLAEASNAAIIGFNVRANAQARTASERAGIEIRYYNIIYDLVDDVKAAMSGLLSPERRETFLGNAEILEVFNITKVGKVAGCRVVEGKVERGAGVRLVRDNVVIHEGKLKTLKRFKDEVNEVPVGQECGMAFENYEDIRAGDTIECFRVEHITRTL.

A disordered region spans residues methionine 1 to glutamine 322. Positions valine 60–arginine 113 are enriched in low complexity. Over residues methionine 131–glutamate 180 the composition is skewed to basic and acidic residues. Composition is skewed to low complexity over residues glutamate 181–glutamate 195, glutamate 203–proline 238, and proline 261–arginine 277. The tr-type G domain occupies serine 411 to aspartate 578. The tract at residues glycine 420–threonine 427 is G1. Glycine 420–threonine 427 serves as a coordination point for GTP. Positions glycine 445 to histidine 449 are G2. The segment at aspartate 466–glycine 469 is G3. GTP is bound by residues aspartate 466 to histidine 470 and asparagine 520 to aspartate 523. Positions asparagine 520 to aspartate 523 are G4. The G5 stretch occupies residues serine 556 to lysine 558.

Belongs to the TRAFAC class translation factor GTPase superfamily. Classic translation factor GTPase family. IF-2 subfamily.

It is found in the cytoplasm. One of the essential components for the initiation of protein synthesis. Protects formylmethionyl-tRNA from spontaneous hydrolysis and promotes its binding to the 30S ribosomal subunits. Also involved in the hydrolysis of GTP during the formation of the 70S ribosomal complex. This chain is Translation initiation factor IF-2, found in Agrobacterium fabrum (strain C58 / ATCC 33970) (Agrobacterium tumefaciens (strain C58)).